An 88-amino-acid chain; its full sequence is Conotoxin tx9a (88 aa).

A signal peptide spans 1–27 (MHLSLARSAVLMLLLLFALGNFVVVQS). Positions 28 to 58 (GQITRDVDNGQLTDNRRNLQSKWKPVSLYMS) are excised as a propeptide. 3 disulfides stabilise this stretch: Cys-62–Cys-76, Cys-66–Cys-78, and Cys-72–Cys-83. 4-carboxyglutamate; partial occurs at positions 68 and 73. Residue Asn-87 is modified to Asparagine amide.

In terms of processing, exists in 4 different forms, depending on gamma-carboxyglutamations. Tx9a-EE does not contain gamma-carboxyglutamate, tx9a-E/gamma has one gamma-carboxyglutamate at position 73, tx9a-gamma/E has one gamma-carboxyglutamate at position 68, and tx9a-agmma/gamma has two gamma-carboxyglutamates at positions 68 and 73. As to expression, expressed by the venom duct. All different gamma-carboxyalted forms are mostly present in part 2, part 3 and part 4 of the venom duct. They are also found in part 1 (proximal part near the venom bulb) and part 5, but in lower quantity.

It localises to the secreted. In terms of biological role, neurotoxin. In vivo, intracranial injection into mice of 10 pmol/g of the peptide induces running in circles and hyperactivity. At higher doses (50 pmol/g), the mice exhibit running and climbing symptoms for close to one hour. Between 130 and 150 pmol/g, characteristic 'spasmodic' symptomatology is elicited. A hand clap would make mice jump high and start running rapidly. When exposed to a loud hand clap, or if the cage cover were dropped, the mice lose motor control and exhibit seizure-like symptoms from which they eventually recover. At the highest doses tested (over 250 pmol/g), after the characteristic spasmodic symptomatology, lethality occurs. Injection of a similar dose range intramuscularly into Siamese fighting fish elicited no unusual symptomatology. The chain is Conotoxin tx9a from Conus textile (Cloth-of-gold cone).